The sequence spans 607 residues: NAD-dependent malic enzyme 2, mitochondrial (607 aa).

The N-terminal 32 residues, 1–32, are a transit peptide targeting the mitochondrion; the sequence is MMWKNIAGLSKAAAAARTHGSRRCFSTAIPGP. Tyrosine 136 serves as the catalytic Proton donor. Arginine 189 provides a ligand contact to NAD(+). Lysine 207 (proton acceptor) is an active-site residue. A divalent metal cation is bound by residues glutamate 278, aspartate 279, and aspartate 302. NAD(+) is bound by residues aspartate 302 and asparagine 449.

This sequence belongs to the malic enzymes family. In terms of assembly, homodimer. Heterodimer of two related subunits in NAD-MEH complex. Interacts with NAD-ME1. Requires Mg(2+) as cofactor. The cofactor is Mn(2+). In terms of tissue distribution, expressed in leaves, stems, flowers, and roots (at protein level). Present in pollen.

It localises to the mitochondrion. It catalyses the reaction (S)-malate + NAD(+) = pyruvate + CO2 + NADH. Its activity is regulated as follows. Activated by 2-ketoglutarate, phosphoenolpyruvate (PEP), fructose 1,6-biphosphate (FBP) and coenzyme A (acetyl-CoA and CoA) as homodimer and by oxaloacetate (OAA), 2-ketoglutarate, succinate, fumarate and CoA as heterodimer NAD-MEH. Repressed by succinate and fumarate as homodimer, in the presence of NAD(+) and competitively toward the substrate L-malate. Functionally, involved in the regulation of sugars and amino acids metabolisms during the night period. The polypeptide is NAD-dependent malic enzyme 2, mitochondrial (NAD-ME2) (Arabidopsis thaliana (Mouse-ear cress)).